We begin with the raw amino-acid sequence, 214 residues long: Probable maleylacetoacetate isomerase (214 aa).

The region spanning Q4 to P84 is the GST N-terminal domain. Residues S14–R19, V56, E68–S69, Q108, and N112–K114 contribute to the glutathione site. Residues D89–L212 enclose the GST C-terminal domain.

Belongs to the GST superfamily. Zeta family. The cofactor is glutathione.

It localises to the cytoplasm. It carries out the reaction 4-maleylacetoacetate = 4-fumarylacetoacetate. Its pathway is amino-acid degradation; L-phenylalanine degradation; acetoacetate and fumarate from L-phenylalanine: step 5/6. The sequence is that of Probable maleylacetoacetate isomerase (gst-42) from Caenorhabditis elegans.